A 269-amino-acid polypeptide reads, in one-letter code: MMKMVCSSSSSSLLVVAALLAVFVGSAQGIAKVPPGPNITAEYGDKWLDAKSTWYGKPTGAGPKDNGGACGYKDVDKAPFNGMTGCGNTPIFKDGRGCGSCFELKCSKPESCSGEPITVHITDDNEEPIAPYHFDLSGHAFGSMAKKGEEENVRGAGELELQFRRVKCKYPDGTKPTFHVEKGSNPNYLALLVKYVDGDGDVVAVDIKEKGKDKWIELKESWGAIWRIDTPDKLTGPFTVRYTTEGGTKAEFEDVIPEGWKADTHDASK.

A signal peptide spans 1–29 (MMKMVCSSSSSSLLVVAALLAVFVGSAQG). An N-linked (GlcNAc...) asparagine glycan is attached at Asn-38. The region spanning 67 to 173 (GGACGYKDVD…RRVKCKYPDG (107 aa)) is the Expansin-like EG45 domain. The Expansin-like CBD domain maps to 187–268 (NYLALLVKYV…GWKADTHDAS (82 aa)).

This sequence belongs to the expansin family. Expansin B subfamily.

Its subcellular location is the secreted. This is Major pollen allergen Pha a 1 from Phalaris aquatica (Canary grass).